A 273-amino-acid chain; its full sequence is 4-hydroxy-tetrahydrodipicolinate reductase (273 aa).

Residues 11–16 and 106–108 each bind NAD(+); these read GALGRM and GTT. His-162 acts as the Proton donor/acceptor in catalysis. (S)-2,3,4,5-tetrahydrodipicolinate is bound at residue His-163. Lys-166 serves as the catalytic Proton donor. 172 to 173 serves as a coordination point for (S)-2,3,4,5-tetrahydrodipicolinate; that stretch reads GT.

This sequence belongs to the DapB family.

The protein localises to the cytoplasm. The catalysed reaction is (S)-2,3,4,5-tetrahydrodipicolinate + NAD(+) + H2O = (2S,4S)-4-hydroxy-2,3,4,5-tetrahydrodipicolinate + NADH + H(+). It catalyses the reaction (S)-2,3,4,5-tetrahydrodipicolinate + NADP(+) + H2O = (2S,4S)-4-hydroxy-2,3,4,5-tetrahydrodipicolinate + NADPH + H(+). Its pathway is amino-acid biosynthesis; L-lysine biosynthesis via DAP pathway; (S)-tetrahydrodipicolinate from L-aspartate: step 4/4. In terms of biological role, catalyzes the conversion of 4-hydroxy-tetrahydrodipicolinate (HTPA) to tetrahydrodipicolinate. The polypeptide is 4-hydroxy-tetrahydrodipicolinate reductase (Synechococcus sp. (strain RCC307)).